A 514-amino-acid chain; its full sequence is HMG box-containing protein 1 (514 aa).

The segment at 150 to 182 (ARPPPVSSSSKSEPAFPHHHWKEETPVRHERAN) is disordered. Residues 170–182 (WKEETPVRHERAN) show a composition bias toward basic and acidic residues. In terms of domain architecture, AXH spans 203 to 345 (WCNSWPSTVW…PPGHLDAINF (143 aa)). Residues 434-502 (CKRPMNAFML…EQKRLNPDCW (69 aa)) constitute a DNA-binding region (HMG box).

In terms of assembly, binds TCF4. Binds RB1. Binds the second PAH repeat of SIN3A. Post-translationally, ubiquitinated by the CTLH E3 ubiquitin-protein ligase complex, leading to subsequent proteasomal degradation.

It localises to the nucleus. In terms of biological role, transcriptional repressor that binds to the promoter region of target genes. Plays a role in the regulation of the cell cycle and of the Wnt pathway. Binds preferentially to the sequence 5'-TTCATTCATTCA-3'. Binding to the histone H1.0 promoter is enhanced by interaction with RB1. Disrupts the interaction between DNA and TCF4. This Pongo abelii (Sumatran orangutan) protein is HMG box-containing protein 1 (HBP1).